The primary structure comprises 1198 residues: Structural polyprotein (1198 aa).

The interaction with host EXOC1 stretch occupies residues 2 to 15 (TKKPGGPGKNRAIN). The Cytoplasmic segment spans residues 2 to 109 (TKKPGGPGKN…RKQNKRGGNE (108 aa)). The tract at residues 37–72 (LLDGRGPVRFVLALITFFKFTALAPTKALLGRWKAV) is hydrophobic; homodimerization of capsid protein C. Positions 106-127 (GGNEGSIMWLASLAVVIAYAGA) are cleaved as a propeptide — ER anchor for the capsid protein C, removed in mature form by serine protease NS3. A helical transmembrane segment spans residues 110–130 (GSIMWLASLAVVIAYAGAMKL). The Extracellular portion of the chain corresponds to 131 to 253 (SNFQGKLLMT…ATRYLMKTEN (123 aa)). The N-linked (GlcNAc...) asparagine; by host glycan is linked to Asn142. The chain crosses the membrane as a helical span at residues 254-274 (WIIRNPGYAFLAATLGWMLGS). Residues 275–279 (NNGQR) are Cytoplasmic-facing. A helical membrane pass occupies residues 280–294 (VVFTILLLLVAPAYS). Residues 295–746 (FNCLGMGNRD…QVFGGAFRTL (452 aa)) are Extracellular-facing. 6 cysteine pairs are disulfide-bonded: Cys297–Cys324, Cys354–Cys410, Cys354–Cys415, Cys368–Cys399, Cys386–Cys410, and Cys386–Cys415. The segment at 392–405 (DRGWGNGCGLFGKG) is fusion peptide. An N-linked (GlcNAc...) asparagine; by host glycan is attached at Asn448. 2 disulfides stabilise this stretch: Cys484–Cys581 and Cys598–Cys629. Residues 747–767 (FGGMSWITQGLMGALLLWMGV) form a helical membrane-spanning segment. Residues 768 to 773 (NARDRS) lie on the Cytoplasmic side of the membrane. A helical transmembrane segment spans residues 774 to 794 (IALAFLATGGVLVFLATNVHA). Residues 795 to 1198 (DTGCAIDITR…CADAWGHHLH (404 aa)) are Extracellular-facing. 6 cysteine pairs are disulfide-bonded: Cys798-Cys809, Cys849-Cys937, Cys973-Cys1017, Cys1074-Cys1123, Cys1085-Cys1106, and Cys1107-Cys1110. 2 N-linked (GlcNAc...) asparagine; by host glycosylation sites follow: Asn924 and Asn1001. The disordered stretch occupies residues 1152–1177 (VDPFSAGPSGDVSGHPGGPSQEVDGQ).

In terms of assembly, homodimer. Interacts (via N-terminus) with host EXOC1 (via C-terminus); this interaction results in EXOC1 degradation through the proteasome degradation pathway. Interacts with host CAPRIN1; this interaction is involved in the suppression of the integrated stress response. As to quaternary structure, forms heterodimers with envelope protein E in the endoplasmic reticulum and Golgi. Homodimer; in the endoplasmic reticulum and Golgi. Interacts with protein prM. Interacts with non-structural protein 1. In terms of processing, genome polyprotein: Specific enzymatic cleavages in vivo yield mature proteins. Cleavages in the lumen of endoplasmic reticulum are performed by host signal peptidase, whereas cleavages in the cytoplasmic side are performed by serine protease NS3. Signal cleavage at the 2K-4B site requires a prior NS3 protease-mediated cleavage at the 4A-2K site. Cleaved in post-Golgi vesicles by a host furin, releasing the mature small envelope protein M, and peptide pr. This cleavage is incomplete as up to 30% of viral particles still carry uncleaved prM. Post-translationally, N-glycosylated.

The protein resides in the secreted. Its subcellular location is the virion membrane. The protein localises to the host endoplasmic reticulum membrane. In terms of biological role, plays a role in virus budding by binding to the cell membrane and gathering the viral RNA into a nucleocapsid that forms the core of a mature virus particle. During virus entry, may induce genome penetration into the host cytoplasm after hemifusion induced by the surface proteins. Can migrate to the cell nucleus where it modulates host functions. Overcomes the anti-viral effects of host EXOC1 by sequestering and degrading the latter through the proteasome degradation pathway. Inhibits the integrated stress response (ISR) in the infected cell by binding to host CAPRIN1. Inhibits RNA silencing by interfering with host Dicer. Its function is as follows. Prevents premature fusion activity of envelope proteins in trans-Golgi by binding to envelope protein E at pH6.0. After virion release in extracellular space, gets dissociated from E dimers. Functionally, acts as a chaperone for envelope protein E during intracellular virion assembly by masking and inactivating envelope protein E fusion peptide. prM is the only viral peptide matured by host furin in the trans-Golgi network probably to avoid catastrophic activation of the viral fusion activity in acidic Golgi compartment prior to virion release. prM-E cleavage is inefficient, and many virions are only partially matured. These uncleaved prM would play a role in immune evasion. In terms of biological role, may play a role in virus budding. Exerts cytotoxic effects by activating a mitochondrial apoptotic pathway through M ectodomain. May display a viroporin activity. Binds to host cell surface receptor and mediates fusion between viral and cellular membranes. Envelope protein is synthesized in the endoplasmic reticulum in the form of heterodimer with protein prM. They play a role in virion budding in the ER, and the newly formed immature particle is covered with 60 spikes composed of heterodimer between precursor prM and envelope protein E. The virion is transported to the Golgi apparatus where the low pH causes dissociation of PrM-E heterodimers and formation of E homodimers. prM-E cleavage is inefficient, and many virions are only partially matured. These uncleaved prM would play a role in immune evasion. Its function is as follows. May play a role in neuroinvasiveness. This chain is Structural polyprotein, found in Japanese encephalitis virus (strain Jaoars982) (JEV).